Reading from the N-terminus, the 157-residue chain is Cyclic pyranopterin monophosphate synthase (157 aa).

Substrate contacts are provided by residues 74–76 and 111–112; these read MCH and ME. The active site involves Asp-126.

This sequence belongs to the MoaC family. As to quaternary structure, homohexamer; trimer of dimers.

The catalysed reaction is (8S)-3',8-cyclo-7,8-dihydroguanosine 5'-triphosphate = cyclic pyranopterin phosphate + diphosphate. It functions in the pathway cofactor biosynthesis; molybdopterin biosynthesis. Catalyzes the conversion of (8S)-3',8-cyclo-7,8-dihydroguanosine 5'-triphosphate to cyclic pyranopterin monophosphate (cPMP). The protein is Cyclic pyranopterin monophosphate synthase of Carboxydothermus hydrogenoformans (strain ATCC BAA-161 / DSM 6008 / Z-2901).